The sequence spans 401 residues: Imidazolonepropionase (401 aa).

Fe(3+) contacts are provided by histidine 66 and histidine 68. Zn(2+)-binding residues include histidine 66 and histidine 68. Residues arginine 75, tyrosine 138, and histidine 171 each contribute to the 4-imidazolone-5-propanoate site. Tyrosine 138 contributes to the N-formimidoyl-L-glutamate binding site. Histidine 236 is a Fe(3+) binding site. Zn(2+) is bound at residue histidine 236. Glutamine 239 contributes to the 4-imidazolone-5-propanoate binding site. Aspartate 311 contributes to the Fe(3+) binding site. Residue aspartate 311 participates in Zn(2+) binding. N-formimidoyl-L-glutamate is bound by residues asparagine 313 and glycine 315. Threonine 316 contributes to the 4-imidazolone-5-propanoate binding site.

Belongs to the metallo-dependent hydrolases superfamily. HutI family. Zn(2+) is required as a cofactor. Requires Fe(3+) as cofactor.

Its subcellular location is the cytoplasm. It catalyses the reaction 4-imidazolone-5-propanoate + H2O = N-formimidoyl-L-glutamate. It participates in amino-acid degradation; L-histidine degradation into L-glutamate; N-formimidoyl-L-glutamate from L-histidine: step 3/3. Functionally, catalyzes the hydrolytic cleavage of the carbon-nitrogen bond in imidazolone-5-propanoate to yield N-formimidoyl-L-glutamate. It is the third step in the universal histidine degradation pathway. In Pseudomonas savastanoi pv. phaseolicola (strain 1448A / Race 6) (Pseudomonas syringae pv. phaseolicola (strain 1448A / Race 6)), this protein is Imidazolonepropionase.